Here is a 116-residue protein sequence, read N- to C-terminus: Ribosome-binding factor A (116 aa).

The protein belongs to the RbfA family. As to quaternary structure, monomer. Binds 30S ribosomal subunits, but not 50S ribosomal subunits or 70S ribosomes.

It is found in the cytoplasm. Functionally, one of several proteins that assist in the late maturation steps of the functional core of the 30S ribosomal subunit. Associates with free 30S ribosomal subunits (but not with 30S subunits that are part of 70S ribosomes or polysomes). Required for efficient processing of 16S rRNA. May interact with the 5'-terminal helix region of 16S rRNA. The polypeptide is Ribosome-binding factor A (Streptococcus pneumoniae (strain ATCC 700669 / Spain 23F-1)).